The primary structure comprises 327 residues: Eukaryotic translation initiation factor 3 subunit I (327 aa).

WD repeat units follow at residues glycine 8–aspartate 49, histidine 51–serine 91, serine 144–asparagine 183, alanine 188–threonine 227, lysine 229–glutamate 268, and glycine 285–aspartate 324.

This sequence belongs to the eIF-3 subunit I family. In terms of assembly, component of the eukaryotic translation initiation factor 3 (eIF-3) complex.

It is found in the cytoplasm. In terms of biological role, component of the eukaryotic translation initiation factor 3 (eIF-3) complex, which is involved in protein synthesis of a specialized repertoire of mRNAs and, together with other initiation factors, stimulates binding of mRNA and methionyl-tRNAi to the 40S ribosome. The eIF-3 complex specifically targets and initiates translation of a subset of mRNAs involved in cell proliferation. The sequence is that of Eukaryotic translation initiation factor 3 subunit I from Brugia malayi (Filarial nematode worm).